The sequence spans 413 residues: Alpha-1-antitrypsin 1-2 (413 aa).

The signal sequence occupies residues 1-24 (MTPSISWGLLLLAGLCCMVPSFLA). N-linked (GlcNAc...) asparagine glycosylation is found at Asn-64, Asn-101, and Asn-265. Residues 368–387 (AATVFEAVPMSMPPILRFDH) form an RCL region.

This sequence belongs to the serpin family.

Its subcellular location is the secreted. Functionally, inhibitor of serine proteases. Its primary target is elastase, but it also has a moderate affinity for plasmin and thrombin. This Mus musculus (Mouse) protein is Alpha-1-antitrypsin 1-2 (Serpina1b).